We begin with the raw amino-acid sequence, 382 residues long: ATP phosphoribosyltransferase regulatory subunit (382 aa).

This sequence belongs to the class-II aminoacyl-tRNA synthetase family. HisZ subfamily. In terms of assembly, heteromultimer composed of HisG and HisZ subunits.

The protein localises to the cytoplasm. It participates in amino-acid biosynthesis; L-histidine biosynthesis; L-histidine from 5-phospho-alpha-D-ribose 1-diphosphate: step 1/9. Its function is as follows. Required for the first step of histidine biosynthesis. May allow the feedback regulation of ATP phosphoribosyltransferase activity by histidine. This is ATP phosphoribosyltransferase regulatory subunit from Burkholderia cenocepacia (strain ATCC BAA-245 / DSM 16553 / LMG 16656 / NCTC 13227 / J2315 / CF5610) (Burkholderia cepacia (strain J2315)).